The primary structure comprises 758 residues: Polyribonucleotide nucleotidyltransferase (758 aa).

The Mg(2+) site is built by Asp-488 and Asp-494. In terms of domain architecture, KH spans 555 to 614 (PKLYTMKINPEKIRDVIGKGGAVIRALTEETGTQINIDEDGTITIASTDSAKADEAKRRI). One can recognise an S1 motif domain in the interval 624 to 692 (GKIYEGPVVK…EKGRVKLSMR (69 aa)). The interval 692-758 (RALLDRPMGD…AGEHSGQMDA (67 aa)) is disordered. Positions 707-735 (PAERGERGDRGDRGDRPERGERRERREPA) are enriched in basic and acidic residues. The span at 736–745 (GADQQQQQQQ) shows a compositional bias: low complexity.

The protein belongs to the polyribonucleotide nucleotidyltransferase family. Mg(2+) serves as cofactor.

The protein localises to the cytoplasm. The catalysed reaction is RNA(n+1) + phosphate = RNA(n) + a ribonucleoside 5'-diphosphate. Its function is as follows. Involved in mRNA degradation. Catalyzes the phosphorolysis of single-stranded polyribonucleotides processively in the 3'- to 5'-direction. This chain is Polyribonucleotide nucleotidyltransferase, found in Paracidovorax citrulli (strain AAC00-1) (Acidovorax citrulli).